Here is a 337-residue protein sequence, read N- to C-terminus: Quercetin 2,3-dioxygenase (337 aa).

Cupin type-2 domains are found at residues 55-110 (KGDA…MQSH) and 226-281 (PKGD…RLDS). Residues His62, His64, Glu69, His103, His234, His236, Glu241, and His275 each coordinate Fe cation.

In terms of assembly, homodimer. The cofactor is Fe(2+).

The enzyme catalyses quercetin + O2 = 2-(3,4-dihydroxybenzoyloxy)-4,6-dihydroxybenzoate + CO. It participates in flavonoid metabolism; quercetin degradation. Its function is as follows. Performs the first step in the degradation of the flavonoid quercetin by a dioxygenase reaction. The enzyme catalyzes the cleavage of the O-heteroaromatic ring of the flavonol quercetin yielding the depside 2-protocatechuoyl-phloroglucinol carboxylic acid and carbon monoxide. This involves the remarkable dioxygenolytic cleavage of two carbon-carbon bonds. The protein is Quercetin 2,3-dioxygenase (qdoI) of Bacillus subtilis (strain 168).